Reading from the N-terminus, the 273-residue chain is 4-hydroxy-tetrahydrodipicolinate reductase (273 aa).

Residues 12–17 (GAGGRM) and glutamate 38 contribute to the NAD(+) site. Arginine 39 is a binding site for NADP(+). NAD(+) is bound by residues 102 to 104 (GTT) and 126 to 129 (AANF). The active-site Proton donor/acceptor is histidine 159. Histidine 160 serves as a coordination point for (S)-2,3,4,5-tetrahydrodipicolinate. The active-site Proton donor is lysine 163. Position 169 to 170 (169 to 170 (GT)) interacts with (S)-2,3,4,5-tetrahydrodipicolinate.

The protein belongs to the DapB family. In terms of assembly, homotetramer.

The protein resides in the cytoplasm. It catalyses the reaction (S)-2,3,4,5-tetrahydrodipicolinate + NAD(+) + H2O = (2S,4S)-4-hydroxy-2,3,4,5-tetrahydrodipicolinate + NADH + H(+). The catalysed reaction is (S)-2,3,4,5-tetrahydrodipicolinate + NADP(+) + H2O = (2S,4S)-4-hydroxy-2,3,4,5-tetrahydrodipicolinate + NADPH + H(+). Its pathway is amino-acid biosynthesis; L-lysine biosynthesis via DAP pathway; (S)-tetrahydrodipicolinate from L-aspartate: step 4/4. Catalyzes the conversion of 4-hydroxy-tetrahydrodipicolinate (HTPA) to tetrahydrodipicolinate. This chain is 4-hydroxy-tetrahydrodipicolinate reductase, found in Klebsiella pneumoniae (strain 342).